The following is a 307-amino-acid chain: Actin maturation protease (307 aa).

A disordered region spans residues 1 to 34; that stretch reads MSLENDAAAPPPPPLPPPPPPQPPSLARSESSKK. Pro residues predominate over residues 9 to 24; it reads APPPPPLPPPPPPQPP. A peptidase C39-like region spans residues 80–200; the sequence is SLIQDGPQCG…WAVASGILLG (121 aa). C88 is a catalytic residue.

It belongs to the ACTMAP family.

It is found in the cytoplasm. It carries out the reaction N-terminal N(alpha)-acetyl-L-methionyl-L-aspartyl-[protein] + H2O = N-terminal L-aspartyl-[protein] + N-acetyl-L-methionine. The enzyme catalyses N-terminal N(alpha)-acetyl-L-methionyl-L-glutamyl-[protein] + H2O = N-terminal L-glutamyl-[protein] + N-acetyl-L-methionine. The catalysed reaction is N-terminal N(alpha)-acetyl-L-cysteinyl-L-aspartyl-[protein] + H2O = N-terminal L-aspartyl-[protein] + N-acetyl-L-cysteine. It catalyses the reaction N-terminal N(alpha)-acetyl-L-cysteinyl-L-glutamyl-[protein] + H2O = N-terminal L-glutamyl-[protein] + N-acetyl-L-cysteine. Its function is as follows. Actin maturation protease that specifically mediates the cleavage of immature acetylated N-terminal actin, thereby contributing to actin maturation. Cleaves N-terminal acetylated methionine of immature cytoplasmic actin after translation. Cleaves N-terminal acetylated cysteine of muscle actin after canonical removal of N-terminal methionine. This is Actin maturation protease from Danio rerio (Zebrafish).